We begin with the raw amino-acid sequence, 274 residues long: Triosephosphate isomerase (274 aa).

Position 13-15 (13-15 (NWK)) interacts with substrate. The active-site Electrophile is H98. Residue E170 is the Proton acceptor of the active site. Substrate-binding residues include G176 and S216.

This sequence belongs to the triosephosphate isomerase family. In terms of assembly, homodimer.

The protein localises to the cytoplasm. The catalysed reaction is D-glyceraldehyde 3-phosphate = dihydroxyacetone phosphate. It functions in the pathway carbohydrate biosynthesis; gluconeogenesis. Its pathway is carbohydrate degradation; glycolysis; D-glyceraldehyde 3-phosphate from glycerone phosphate: step 1/1. Functionally, involved in the gluconeogenesis. Catalyzes stereospecifically the conversion of dihydroxyacetone phosphate (DHAP) to D-glyceraldehyde-3-phosphate (G3P). The protein is Triosephosphate isomerase of Onion yellows phytoplasma (strain OY-M).